The primary structure comprises 252 residues: Probable phosphatase Shewmr4_2619 (252 aa).

Residues histidine 8, histidine 10, histidine 16, histidine 41, glutamate 74, histidine 102, histidine 132, aspartate 193, and histidine 195 each coordinate Zn(2+).

It belongs to the PHP family. The cofactor is Zn(2+).

The polypeptide is Probable phosphatase Shewmr4_2619 (Shewanella sp. (strain MR-4)).